The primary structure comprises 412 residues: Gamma-glutamyl phosphate reductase (412 aa).

The protein belongs to the gamma-glutamyl phosphate reductase family.

The protein localises to the cytoplasm. It carries out the reaction L-glutamate 5-semialdehyde + phosphate + NADP(+) = L-glutamyl 5-phosphate + NADPH + H(+). Its pathway is amino-acid biosynthesis; L-proline biosynthesis; L-glutamate 5-semialdehyde from L-glutamate: step 2/2. Its function is as follows. Catalyzes the NADPH-dependent reduction of L-glutamate 5-phosphate into L-glutamate 5-semialdehyde and phosphate. The product spontaneously undergoes cyclization to form 1-pyrroline-5-carboxylate. The chain is Gamma-glutamyl phosphate reductase from Streptococcus suis (strain 98HAH33).